The chain runs to 509 residues: Maturase K (509 aa).

Belongs to the intron maturase 2 family. MatK subfamily.

It localises to the plastid. The protein localises to the chloroplast. Usually encoded in the trnK tRNA gene intron. Probably assists in splicing its own and other chloroplast group II introns. The chain is Maturase K from Drimys granadensis.